The following is a 597-amino-acid chain: Arginine--tRNA ligase (597 aa).

The 'HIGH' region signature appears at 125-135; it reads PNTNKPLHLGH.

Belongs to the class-I aminoacyl-tRNA synthetase family. Monomer.

It is found in the cytoplasm. It carries out the reaction tRNA(Arg) + L-arginine + ATP = L-arginyl-tRNA(Arg) + AMP + diphosphate. The sequence is that of Arginine--tRNA ligase from Parabacteroides distasonis (strain ATCC 8503 / DSM 20701 / CIP 104284 / JCM 5825 / NCTC 11152).